The following is a 203-amino-acid chain: Small ribosomal subunit protein uS4 (203 aa).

The S4 RNA-binding domain occupies 93–173 (RRFDNVVFRS…IPSWIQVDKA (81 aa)).

Belongs to the universal ribosomal protein uS4 family. Part of the 30S ribosomal subunit. Contacts protein S5. The interaction surface between S4 and S5 is involved in control of translational fidelity.

Its function is as follows. One of the primary rRNA binding proteins, it binds directly to 16S rRNA where it nucleates assembly of the body of the 30S subunit. In terms of biological role, with S5 and S12 plays an important role in translational accuracy. The polypeptide is Small ribosomal subunit protein uS4 (Chlorobium phaeobacteroides (strain DSM 266 / SMG 266 / 2430)).